The primary structure comprises 236 residues: MICOS complex subunit MIC25 (236 aa).

Residues 1-11 show a composition bias toward basic and acidic residues; that stretch reads MGSAESREGRR. A disordered region spans residues 1–22; the sequence is MGSAESREGRRASFGMDEEERV. A lipid anchor (N-myristoyl glycine) is attached at Gly-2. A phosphoserine mark is found at Ser-13 and Ser-31. Disordered stretches follow at residues 34 to 86 and 109 to 132; these read VVNR…VQVD and EREA…DQEK. Residues 48–58 are compositionally biased toward low complexity; the sequence is GLLAPPAAALG. 2 stretches are compositionally biased toward basic and acidic residues: residues 62 to 71 and 122 to 132; these read GREKDSKPPR and RRGEGGVDQEK. Residues 127–167 adopt a coiled-coil conformation; that stretch reads GVDQEKQRLAQRARELESQEEELRCRDAFYKEQLGRLERQN. In terms of domain architecture, CHCH spans 195–236; that stretch reads EPVCSGLQAQILRCYRDRLQEVLLCADLVRAYQHCVSSAHKG. Short sequence motifs (cx9C motif) lie at residues 198 to 208 and 219 to 229; these read CSGLQAQILRC and CADLVRAYQHC. 2 disulfides stabilise this stretch: Cys-198-Cys-229 and Cys-208-Cys-219.

Belongs to the MICOS complex subunit Mic19 family. Metazoan Mic25 subfamily. In terms of assembly, component of the mitochondrial contact site and cristae organizing system (MICOS) complex, composed of at least MICOS10/MIC10, CHCHD3/MIC19, CHCHD6/MIC25, APOOL/MIC27, IMMT/MIC60, APOO/MIC23/MIC26 and MICOS13/MIC13. This complex was also known under the names MINOS or MitOS complex. The MICOS complex associates with mitochondrial outer membrane proteins SAMM50, MTX1 and MTX2 (together described as components of the mitochondrial outer membrane sorting assembly machinery (SAM) complex) and DNAJC11, mitochondrial inner membrane protein TMEM11 and with HSPA9. The MICOS and SAM complexes together with DNAJC11 are part of a large protein complex spanning both membranes termed the mitochondrial intermembrane space bridging (MIB) complex. Interacts with DISC1. Interacts with IMMT/MIC60.

It is found in the mitochondrion inner membrane. It localises to the mitochondrion. Functionally, component of the MICOS complex, a large protein complex of the mitochondrial inner membrane that plays crucial roles in the maintenance of crista junctions, inner membrane architecture, and formation of contact sites to the outer membrane. This chain is MICOS complex subunit MIC25 (CHCHD6), found in Bos taurus (Bovine).